Here is a 295-residue protein sequence, read N- to C-terminus: Protease HtpX (295 aa).

The next 2 helical transmembrane spans lie at 5–25 (VILFLATNLAVLLVLSISMRL) and 43–63 (ALLIFAAIIGFSGSLISLAIS). Residue His148 participates in Zn(2+) binding. Glu149 is a catalytic residue. His152 lines the Zn(2+) pocket. A run of 2 helical transmembrane segments spans residues 159 to 179 (VTLALIQGVVNTFVIFLARII) and 198 to 218 (FFITTLIAQTVLAILASLIVL). Glu225 provides a ligand contact to Zn(2+).

The protein belongs to the peptidase M48B family. Zn(2+) is required as a cofactor.

It localises to the cell inner membrane. This chain is Protease HtpX, found in Nitrosococcus oceani (strain ATCC 19707 / BCRC 17464 / JCM 30415 / NCIMB 11848 / C-107).